The primary structure comprises 104 residues: uncharacterized protein (104 aa).

The helical transmembrane segment at 80–98 threads the bilayer; the sequence is GSSLPLFDLVFILLSTFFL.

Its subcellular location is the membrane. This is an uncharacterized protein from Saccharomyces cerevisiae (strain ATCC 204508 / S288c) (Baker's yeast).